The primary structure comprises 279 residues: Cytochrome c1 (279 aa).

The N-terminal stretch at 1–21 is a signal peptide; the sequence is MKKLLISAVSALVLGSGAAFA. The heme c site is built by cysteine 55, cysteine 58, histidine 59, and methionine 204. Residues 248 to 266 form a helical membrane-spanning segment; sequence MGLVAMVMLGLLSVMLYLT.

The main subunits of complex b-c1 are: cytochrome b, cytochrome c1 and the Rieske protein. Binds 1 heme c group covalently per subunit.

The protein localises to the cell membrane. In terms of biological role, component of the ubiquinol-cytochrome c reductase complex (complex III or cytochrome b-c1 complex), which is a respiratory chain that generates an electrochemical potential coupled to ATP synthesis. c1 functions as an electron donor to cytochrome c. This chain is Cytochrome c1 (petC), found in Rhodobacter capsulatus (strain ATCC BAA-309 / NBRC 16581 / SB1003).